Consider the following 511-residue polypeptide: MSKHTLSADVPVVSMDAITKTFPGVKALDQVRLDLYPGQVTALVGENGAGKSTTVKILTGIYQPDGGTIRIAGAPVILNTPNDASAAGITAIHQETVLFDELTVAENIFIGHAPRTKWGLIDKAAMHRKARGLLDEIGAPFDTGAYLRELGIANKHLVAIARALSVDARVVIMDEPTAALSHKEIEELYELVETLKAQGKAILFISHKFDEIFRIADRYTVFRDGAFVSDGLISDIDQDALVKMMVGRAVDHIFPERQAALGEEVLQVAGYAHPTEFAGIGFTLKRGEILGFYGLVGAGRSELMQALFGITRPSKGVTKINGDIRVIRSPADAVNNGIVYVPEDRGKQGVVIGLPIFQNITLPSLGRTSQSGFLRMAEEFKLARDYAERLDLRAAALDQDVGNLSGGNQQKVVIAKWLATQPQVIILDEPTKGIDIGSKAAVHEFMAELAGQGLAVIMVSSEIPEVIGMSDRVIVMREGRIAAEVQGEDLTPETLVRHAAGIAPAPESIPA.

2 ABC transporter domains span residues Val-13–Ala-249 and Ala-260–Ala-503. Gly-45–Ser-52 contacts ATP.

It belongs to the ABC transporter superfamily. Ribose importer (TC 3.A.1.2.1) family. The complex is composed of an ATP-binding protein (RbsA), two transmembrane proteins (RbsC) and a solute-binding protein (RbsB).

It is found in the cell inner membrane. The catalysed reaction is D-ribose(out) + ATP + H2O = D-ribose(in) + ADP + phosphate + H(+). Part of the ABC transporter complex RbsABC involved in ribose import. Responsible for energy coupling to the transport system. This chain is Ribose import ATP-binding protein RbsA, found in Roseobacter denitrificans (strain ATCC 33942 / OCh 114) (Erythrobacter sp. (strain OCh 114)).